Here is a 281-residue protein sequence, read N- to C-terminus: Large ribosomal subunit protein uL2 (281 aa).

Residues 27 to 38 (DSPEKSLTEPLK) show a composition bias toward basic and acidic residues. Disordered stretches follow at residues 27–59 (DSPE…GGHK) and 225–281 (AMNP…ARSQ). The span at 45–59 (VHGHITRRHQGGGHK) shows a compositional bias: basic residues.

It belongs to the universal ribosomal protein uL2 family. Part of the 50S ribosomal subunit. Forms a bridge to the 30S subunit in the 70S ribosome.

Functionally, one of the primary rRNA binding proteins. Required for association of the 30S and 50S subunits to form the 70S ribosome, for tRNA binding and peptide bond formation. It has been suggested to have peptidyltransferase activity; this is somewhat controversial. Makes several contacts with the 16S rRNA in the 70S ribosome. The chain is Large ribosomal subunit protein uL2 from Myxococcus xanthus (strain DK1622).